A 255-amino-acid chain; its full sequence is 3-deoxy-manno-octulosonate cytidylyltransferase (255 aa).

The protein belongs to the KdsB family.

It is found in the cytoplasm. The enzyme catalyses 3-deoxy-alpha-D-manno-oct-2-ulosonate + CTP = CMP-3-deoxy-beta-D-manno-octulosonate + diphosphate. It functions in the pathway nucleotide-sugar biosynthesis; CMP-3-deoxy-D-manno-octulosonate biosynthesis; CMP-3-deoxy-D-manno-octulosonate from 3-deoxy-D-manno-octulosonate and CTP: step 1/1. The protein operates within bacterial outer membrane biogenesis; lipopolysaccharide biosynthesis. Activates KDO (a required 8-carbon sugar) for incorporation into bacterial lipopolysaccharide in Gram-negative bacteria. This chain is 3-deoxy-manno-octulosonate cytidylyltransferase, found in Xanthobacter autotrophicus (strain ATCC BAA-1158 / Py2).